Consider the following 157-residue polypeptide: Ribosomal RNA large subunit methyltransferase H (157 aa).

S-adenosyl-L-methionine is bound by residues Leu-73, Gly-105, and 124–129; that span reads LSKMTF.

It belongs to the RNA methyltransferase RlmH family. Homodimer.

It is found in the cytoplasm. The catalysed reaction is pseudouridine(1915) in 23S rRNA + S-adenosyl-L-methionine = N(3)-methylpseudouridine(1915) in 23S rRNA + S-adenosyl-L-homocysteine + H(+). Specifically methylates the pseudouridine at position 1915 (m3Psi1915) in 23S rRNA. This is Ribosomal RNA large subunit methyltransferase H from Parabacteroides distasonis (strain ATCC 8503 / DSM 20701 / CIP 104284 / JCM 5825 / NCTC 11152).